The primary structure comprises 555 residues: Glutamine--tRNA ligase (555 aa).

The short motif at Pro-34–His-44 is the 'HIGH' region element. ATP-binding positions include Glu-35–Asn-37 and His-41–Ser-47. Asp-67 and Tyr-212 together coordinate L-glutamine. Residues Thr-231, Arg-261–Leu-262, and Met-269–Lys-271 contribute to the ATP site. The 'KMSKS' region motif lies at Val-268–Arg-272. An interaction with tRNA region spans residues Thr-317 to Glu-324.

This sequence belongs to the class-I aminoacyl-tRNA synthetase family. In terms of assembly, monomer.

Its subcellular location is the cytoplasm. It catalyses the reaction tRNA(Gln) + L-glutamine + ATP = L-glutaminyl-tRNA(Gln) + AMP + diphosphate. This Salmonella newport (strain SL254) protein is Glutamine--tRNA ligase.